A 448-amino-acid chain; its full sequence is Fibulin-5 (448 aa).

A signal peptide spans 1–23 (MPGLKRILTVTILALWLPHPGNA). One can recognise an EGF-like 1; calcium-binding domain in the interval 42–82 (DIDECRTIPEACRGDMMCVNQNGGYLCIPRTNPVYRGPYSN). 17 disulfides stabilise this stretch: Cys46–Cys59, Cys53–Cys68, Cys131–Cys144, Cys138–Cys153, Cys155–Cys166, Cys172–Cys181, Cys177–Cys190, Cys192–Cys205, Cys211–Cys221, Cys217–Cys230, Cys232–Cys245, Cys251–Cys262, Cys258–Cys271, Cys273–Cys286, Cys292–Cys305, Cys299–Cys314, and Cys320–Cys332. Residues 54–56 (RGD) carry the Cell attachment site motif. In terms of domain architecture, EGF-like 2; calcium-binding spans 127–167 (DVDECATDSHQCNPTQICINTEGGYTCSCTDGYWLLEGQCL). The EGF-like 3; calcium-binding domain maps to 168-206 (DIDECRYGYCQQLCANVPGSYSCTCNPGFTLNDDGRSCQ). The region spanning 207 to 246 (DVNECETENPCVQTCVNTYGSFICRCDPGYELEEDGIHCS) is the EGF-like 4; calcium-binding domain. The interval 245–448 (CSDMDECSFS…LRIYVSQYPF (204 aa)) is interaction with LOXL1. The 41-residue stretch at 247 to 287 (DMDECSFSEFLCQHECVNQPGSYFCSCPPGYVLLDDNRSCQ) folds into the EGF-like 5; calcium-binding domain. N-linked (GlcNAc...) asparagine glycans are attached at residues Asn283 and Asn296. The EGF-like 6; calcium-binding domain occupies 288 to 333 (DINECEHRNHTCTSLQTCYNLQGGFKCIDPISCEEPYLLIGENRCM).

This sequence belongs to the fibulin family. Homodimer. Monomer, homodimerizes in presence of Ca(2+). Interacts with ELN. Interacts (via N-terminus) with the integrins ITGAV/ITGB3, ITGAV/ITGB5 and ITGA9/ITGB1. Interacts with FBN1 (via N-terminal domain). Forms a ternary complex with ELN and FBN1. Interacts with EFEMP2 with moderate affinity. Interacts with LOXL1. Post-translationally, N-glycosylated.

The protein localises to the secreted. The protein resides in the extracellular space. Its subcellular location is the extracellular matrix. Functionally, essential for elastic fiber formation, is involved in the assembly of continuous elastin (ELN) polymer and promotes the interaction of microfibrils and ELN. Stabilizes and organizes elastic fibers in the skin, lung and vasculature. Promotes adhesion of endothelial cells through interaction of integrins and the RGD motif. Vascular ligand for integrin receptors which may play a role in vascular development and remodeling. May act as an adapter that mediates the interaction between FBN1 and ELN. This is Fibulin-5 (Fbln5) from Mus musculus (Mouse).